Consider the following 178-residue polypeptide: Adenine phosphoribosyltransferase (178 aa).

Belongs to the purine/pyrimidine phosphoribosyltransferase family. As to quaternary structure, homodimer.

It localises to the cytoplasm. It carries out the reaction AMP + diphosphate = 5-phospho-alpha-D-ribose 1-diphosphate + adenine. It participates in purine metabolism; AMP biosynthesis via salvage pathway; AMP from adenine: step 1/1. Catalyzes a salvage reaction resulting in the formation of AMP, that is energically less costly than de novo synthesis. This is Adenine phosphoribosyltransferase from Bacteroides fragilis (strain YCH46).